Consider the following 119-residue polypeptide: Small ribosomal subunit protein uS13m (119 aa).

It belongs to the universal ribosomal protein uS13 family. Component of the mitochondrial small ribosomal subunit (mt-SSU). Mature N.crassa 74S mitochondrial ribosomes consist of a small (37S) and a large (54S) subunit. The 37S small subunit contains a 16S ribosomal RNA (16S mt-rRNA) and 32 different proteins. The 54S large subunit contains a 23S rRNA (23S mt-rRNA) and 42 different proteins.

It localises to the mitochondrion. Component of the mitochondrial ribosome (mitoribosome), a dedicated translation machinery responsible for the synthesis of mitochondrial genome-encoded proteins, including at least some of the essential transmembrane subunits of the mitochondrial respiratory chain. The mitoribosomes are attached to the mitochondrial inner membrane and translation products are cotranslationally integrated into the membrane. This is Small ribosomal subunit protein uS13m (sws2) from Neurospora crassa (strain ATCC 24698 / 74-OR23-1A / CBS 708.71 / DSM 1257 / FGSC 987).